A 353-amino-acid chain; its full sequence is UPF0283 membrane protein YcjF (353 aa).

A compositionally biased stretch (basic and acidic residues) spans 1–19 (MSEPLKPRIDFAEPLKEEP). The interval 1 to 48 (MSEPLKPRIDFAEPLKEEPTSAFKAQQTFSEAESHTFAPAAIDERPED) is disordered. The Periplasmic segment spans residues 1 to 69 (MSEPLKPRID…LRPKRSLWRK (69 aa)). The helical transmembrane segment at 70 to 90 (MVMGGLALFGASVVGQGVQWT) threads the bilayer. Topologically, residues 91–99 (MNAWQTQDW) are cytoplasmic. Residues 100–120 (VALGGCAAGALIVGAGVGSVV) form a helical membrane-spanning segment. The Periplasmic portion of the chain corresponds to 121 to 212 (TEWWRLWRLR…ARREISRFAA (92 aa)). The helical transmembrane segment at 213–233 (ESTLMIAVSPLALVDMAFIAW) threads the bilayer. The Cytoplasmic portion of the chain corresponds to 234–353 (RNLRLINRIA…LQKSKSSPEK (120 aa)).

Belongs to the UPF0283 family.

The protein resides in the cell inner membrane. The chain is UPF0283 membrane protein YcjF (ycjF) from Salmonella typhi.